We begin with the raw amino-acid sequence, 96 residues long: MSRISMEQVKHVAHLARLAITEEEAKLFTEQLGDIIQFAEQLNELDTEGVEPTSHVLDMKNVLREDKPEKGLPVEDVLKNAPDHEDGQIRVPSVLE.

This sequence belongs to the GatC family. Heterotrimer of A, B and C subunits.

The enzyme catalyses L-glutamyl-tRNA(Gln) + L-glutamine + ATP + H2O = L-glutaminyl-tRNA(Gln) + L-glutamate + ADP + phosphate + H(+). It carries out the reaction L-aspartyl-tRNA(Asn) + L-glutamine + ATP + H2O = L-asparaginyl-tRNA(Asn) + L-glutamate + ADP + phosphate + 2 H(+). Allows the formation of correctly charged Asn-tRNA(Asn) or Gln-tRNA(Gln) through the transamidation of misacylated Asp-tRNA(Asn) or Glu-tRNA(Gln) in organisms which lack either or both of asparaginyl-tRNA or glutaminyl-tRNA synthetases. The reaction takes place in the presence of glutamine and ATP through an activated phospho-Asp-tRNA(Asn) or phospho-Glu-tRNA(Gln). The protein is Glutamyl-tRNA(Gln) amidotransferase subunit C of Halalkalibacterium halodurans (strain ATCC BAA-125 / DSM 18197 / FERM 7344 / JCM 9153 / C-125) (Bacillus halodurans).